Here is a 529-residue protein sequence, read N- to C-terminus: Bifunctional purine biosynthesis protein PurH (529 aa).

One can recognise an MGS-like domain in the interval 1–148; sequence MQQRRPVRRA…KNHKDVAIVV (148 aa).

The protein belongs to the PurH family.

It carries out the reaction (6R)-10-formyltetrahydrofolate + 5-amino-1-(5-phospho-beta-D-ribosyl)imidazole-4-carboxamide = 5-formamido-1-(5-phospho-D-ribosyl)imidazole-4-carboxamide + (6S)-5,6,7,8-tetrahydrofolate. The catalysed reaction is IMP + H2O = 5-formamido-1-(5-phospho-D-ribosyl)imidazole-4-carboxamide. Its pathway is purine metabolism; IMP biosynthesis via de novo pathway; 5-formamido-1-(5-phospho-D-ribosyl)imidazole-4-carboxamide from 5-amino-1-(5-phospho-D-ribosyl)imidazole-4-carboxamide (10-formyl THF route): step 1/1. The protein operates within purine metabolism; IMP biosynthesis via de novo pathway; IMP from 5-formamido-1-(5-phospho-D-ribosyl)imidazole-4-carboxamide: step 1/1. This chain is Bifunctional purine biosynthesis protein PurH, found in Salmonella typhi.